Here is a 1944-residue protein sequence, read N- to C-terminus: uncharacterized protein (1944 aa).

The segment at 908–999 (SQNLNFLKSK…SESEEESSNG (92 aa)) is disordered. Composition is skewed to basic and acidic residues over residues 916–929 (SKQE…ESAK) and 939–949 (LSEKLNSDNHI). Residues 985-996 (SDEDTSESEEES) show a composition bias toward acidic residues. 1293–1300 (GPPGTGKT) is an ATP binding site. The interval 1824 to 1944 (QEAHKVKKRH…PPKVEHFKRK (121 aa)) is disordered. Composition is skewed to basic and acidic residues over residues 1843–1852 (GTERDEDIPN) and 1869–1891 (KVTK…KIDE). The segment covering 1912–1922 (GHMKKSKKPKS) has biased composition (basic residues).

The protein belongs to the DNA2/NAM7 helicase family.

It is found in the nucleus. This is an uncharacterized protein from Schizosaccharomyces pombe (strain 972 / ATCC 24843) (Fission yeast).